The chain runs to 416 residues: Putative gustatory receptor 57a (416 aa).

Topologically, residues 1-13 are cytoplasmic; it reads MAVLYFFREPETV. The chain crosses the membrane as a helical span at residues 14–34; that stretch reads FDCAAFICILQFLMGCNGFGI. The Extracellular portion of the chain corresponds to 35–48; sequence RRSTFRISWASRIY. The chain crosses the membrane as a helical span at residues 49–69; it reads SMSVAIAAFCCLFGSLSVLLA. Residues 70–83 lie on the Cytoplasmic side of the membrane; it reads EEDIRERLAKADNL. Residues 84 to 104 traverse the membrane as a helical segment; it reads VLSISALELLMSTLVFGVTVI. Over 105 to 143 the chain is Extracellular; that stretch reads SLQVFARRHLGIYQRLAALDARLMSDFGANLNYRKMLRK. The chain crosses the membrane as a helical span at residues 144–164; sequence NIAVLGIVTTIYLMAINSAAV. Residues 165–171 lie on the Cytoplasmic side of the membrane; the sequence is QVASGHR. Residues 172 to 192 traverse the membrane as a helical segment; the sequence is ALFLLFALCYTIVTGGPHFTG. Over 193 to 295 the chain is Extracellular; that stretch reads YVHMTLAEML…NEEENGSCYR (103 aa). An N-linked (GlcNAc...) asparagine glycan is attached at Asn290. Residues 296–316 form a helical membrane-spanning segment; that stretch reads MLGYLALVMIPPLYKLLIAPF. Residues 317–374 are Cytoplasmic-facing; it reads YCDRTIYEARRCLRLVEKLDDWFPQKSSLRPLVESLMSWRIQAKIQFTSGLDVVLSRK. The chain crosses the membrane as a helical span at residues 375–395; the sequence is VIGLFTSILVNYLLILIQFAM. Over 396–416 the chain is Extracellular; it reads TQKMGEQIEQQKIALQEWIGF.

This sequence belongs to the insect chemoreceptor superfamily. Gustatory receptor (GR) family. Gr57a subfamily. As to expression, in larvae, is expressed in neurons of the terminal external chemosensory organ as well as in the dorsal pharyngeal sense organ.

It is found in the cell membrane. In terms of biological role, probable gustatory receptor which mediates acceptance or avoidance behavior, depending on its substrates. The sequence is that of Putative gustatory receptor 57a (Gr57a) from Drosophila melanogaster (Fruit fly).